The primary structure comprises 463 residues: Fumarate hydratase class II (463 aa).

Residues 98–100 (SGT), 129–132 (HPND), 139–141 (SSN), and threonine 187 each bind substrate. The Proton donor/acceptor role is filled by histidine 188. Serine 318 is an active-site residue. Residues serine 319 and 324-326 (KVN) each bind substrate.

This sequence belongs to the class-II fumarase/aspartase family. Fumarase subfamily. Homotetramer.

The protein resides in the cytoplasm. It carries out the reaction (S)-malate = fumarate + H2O. Its pathway is carbohydrate metabolism; tricarboxylic acid cycle; (S)-malate from fumarate: step 1/1. Functionally, involved in the TCA cycle. Catalyzes the stereospecific interconversion of fumarate to L-malate. The protein is Fumarate hydratase class II of Caulobacter vibrioides (strain ATCC 19089 / CIP 103742 / CB 15) (Caulobacter crescentus).